Reading from the N-terminus, the 117-residue chain is Non-specific lipid-transfer protein 2B (117 aa).

The N-terminal stretch at 1–25 is a signal peptide; sequence MARAQLVLVALVAALLLAGPHTTMA. 4 cysteine pairs are disulfide-bonded: C29/C76, C39/C53, C54/C99, and C74/C113.

It belongs to the plant LTP family. In terms of tissue distribution, expressed in roots, mesocotyls and developing leaves.

Its function is as follows. Plant non-specific lipid-transfer proteins transfer phospholipids as well as galactolipids across membranes. May play a role in wax or cutin deposition in the cell walls of expanding epidermal cells and certain secretory tissues. This is Non-specific lipid-transfer protein 2B (LTP2-B) from Oryza sativa subsp. japonica (Rice).